Consider the following 80-residue polypeptide: Growth factor (80 aa).

Positions 1–19 are cleaved as a signal peptide; sequence MATRNLVASLLCIMYAVHA. The EGF-like domain occupies 29 to 73; it reads HVKVCNHDYENYCLNNGTCFTIALDNVSITPFCVCRINYEGSRCQ. Cystine bridges form between cysteine 33–cysteine 47, cysteine 41–cysteine 61, and cysteine 63–cysteine 72. Asparagine 44 and asparagine 54 each carry an N-linked (GlcNAc...) asparagine; by host glycan.

Its subcellular location is the secreted. This chain is Growth factor, found in Oryctolagus cuniculus (Rabbit).